Here is a 760-residue protein sequence, read N- to C-terminus: Histone-lysine N-methyltransferase EZH2 (760 aa).

Disordered stretches follow at residues 208-231 and 356-444; these read KDDAEDHKEQLSSESHNNDGSKKF and PERA…PENV. Positions 361-373 are enriched in basic residues; that stretch reads TPSKRSTGRRRGR. Polar residues predominate over residues 375–388; it reads PNSNSRPSTPTVNS. The segment covering 389-400 has biased composition (basic and acidic residues); it reads ETKDTDSDREGG. Positions 517–619 constitute a CXC domain; it reads CRKIQLKKDG…SKNVSCKNCS (103 aa). The region spanning 626–741 is the SET domain; the sequence is KHLLLAPSDV…TGEELFFDYR (116 aa).

It belongs to the class V-like SAM-binding methyltransferase superfamily. Histone-lysine methyltransferase family. EZ subfamily. In terms of assembly, component of the prc2/eed-ezh2 complex.

Its subcellular location is the nucleus. The catalysed reaction is L-lysyl(27)-[histone H3] + 3 S-adenosyl-L-methionine = N(6),N(6),N(6)-trimethyl-L-lysyl(27)-[histone H3] + 3 S-adenosyl-L-homocysteine + 3 H(+). Its function is as follows. Polycomb group (PcG) protein. Catalytic subunit of the prc2/eed-ezh2 complex, which methylates 'Lys-9' and 'Lys-27' of histone H3, leading to transcriptional repression of the affected target gene. May regulate the circadian clock via histone methylation at the promoter of the circadian genes. This is Histone-lysine N-methyltransferase EZH2 (ezh2) from Danio rerio (Zebrafish).